The primary structure comprises 265 residues: Mlc titration factor A (265 aa).

The Zn(2+) site is built by His-111, His-148, His-152, and Glu-211.

It belongs to the MtfA family. In terms of assembly, interacts with Mlc. Zn(2+) is required as a cofactor.

It is found in the cytoplasm. Functionally, involved in the modulation of the activity of the glucose-phosphotransferase system (glucose-PTS). Interacts with the transcriptional repressor Mlc, preventing its interaction with DNA and leading to the modulation of expression of genes regulated by Mlc, including ptsG, which encodes the PTS system glucose-specific EIICB component. Shows zinc-dependent metallopeptidase activity. In Escherichia coli (strain ATCC 8739 / DSM 1576 / NBRC 3972 / NCIMB 8545 / WDCM 00012 / Crooks), this protein is Mlc titration factor A.